Reading from the N-terminus, the 534-residue chain is MSDTTLNVSLASQGYPEPAELFANLGTAPLVEHAVRNGEGLLCVDGPLVVETGKHTGRSAKDKFIVRDAETENTVWWGKTNVAMSPEHFAALKADFIKALGEKDRLYVADLFGGSQPEHRVKVRVINELAWHNLFIRTLLVRPTTDELASFVPEYTIIDLPSFRADPARHGSRSETVIAVNFTEKLILIGGTAYAGEMKKSVFGILNYLLPVKGVMPMHCSANVGPDGKTAVFFGLSGTGKTTLSADASRTLIGDDEHGWSDTAVFNFEGGCYAKMIRLSAEAEPEIFATTKRFGTVLENVVIDPVTRTIDLDDNSLAENSRGSYPIDFIPNASEENLGPVPANLIFLTADAYGVLPPIARLTPDQAMYHFLSGYTARVAGTEIGVTEPEATFSTCFGAPFMPRHPSVYGNLLKERIAKGGVKCWLVNTGWSGGKATQEGIKRMPIKATRALLNAALDGSLNSATFTKDPNFGFEVPVEVPGVDTKLLDPRGAWADGEEYDKTAQELVRKFVDNFQQFADHVDQSVRDAAPVAA.

Substrate is bound by residues R58, Y194, and K200. ATP is bound by residues K200, H219, and 235-243 (GLSGTGKTT). Residues K200 and H219 each contribute to the Mn(2+) site. D256 provides a ligand contact to Mn(2+). The ATP site is built by E284, R322, and T449. Residue R322 participates in substrate binding.

This sequence belongs to the phosphoenolpyruvate carboxykinase (ATP) family. Requires Mn(2+) as cofactor.

The protein localises to the cytoplasm. It catalyses the reaction oxaloacetate + ATP = phosphoenolpyruvate + ADP + CO2. The protein operates within carbohydrate biosynthesis; gluconeogenesis. In terms of biological role, involved in the gluconeogenesis. Catalyzes the conversion of oxaloacetate (OAA) to phosphoenolpyruvate (PEP) through direct phosphoryl transfer between the nucleoside triphosphate and OAA. The sequence is that of Phosphoenolpyruvate carboxykinase (ATP) from Novosphingobium aromaticivorans (strain ATCC 700278 / DSM 12444 / CCUG 56034 / CIP 105152 / NBRC 16084 / F199).